A 160-amino-acid chain; its full sequence is Endoribonuclease YbeY (160 aa).

Positions 123, 127, and 133 each coordinate Zn(2+).

This sequence belongs to the endoribonuclease YbeY family. Zn(2+) serves as cofactor.

It is found in the cytoplasm. In terms of biological role, single strand-specific metallo-endoribonuclease involved in late-stage 70S ribosome quality control and in maturation of the 3' terminus of the 16S rRNA. This is Endoribonuclease YbeY from Shouchella clausii (strain KSM-K16) (Alkalihalobacillus clausii).